Here is a 197-residue protein sequence, read N- to C-terminus: MIEMEILRNTVQKIAKHAIEAIDKVDEAELEMMISKIMDASSVFIVGTGRSELIGKAFAMRLMHLGFKVHVVGDVTTPAIRDEDCLIAISGSGETKTVTLAAETSRSVGATVVAVTATPESTLTGYSDVVICIPSKTKEPWKYYTSGVLRGEYDDLTPMGTLFEDSTHLFLDGLIAEFMSILGKREKDLKERHAIIE.

Residues 33 to 184 (MISKIMDASS…IAEFMSILGK (152 aa)) enclose the SIS domain.

It belongs to the SIS family. PHI subfamily.

This is an uncharacterized protein from Methanothermobacter thermautotrophicus (strain ATCC 29096 / DSM 1053 / JCM 10044 / NBRC 100330 / Delta H) (Methanobacterium thermoautotrophicum).